Consider the following 179-residue polypeptide: Archaemetzincin (179 aa).

A Zn(2+)-binding site is contributed by His-128. The Proton acceptor role is filled by Glu-129. The Zn(2+) site is built by His-132, His-138, Cys-139, Cys-144, Cys-163, and Cys-166.

It belongs to the peptidase M54 family. Monomer. Zn(2+) is required as a cofactor.

In terms of biological role, probable zinc metalloprotease whose natural substrate is unknown. The polypeptide is Archaemetzincin (Methanocaldococcus jannaschii (strain ATCC 43067 / DSM 2661 / JAL-1 / JCM 10045 / NBRC 100440) (Methanococcus jannaschii)).